We begin with the raw amino-acid sequence, 92 residues long: Small ribosomal subunit protein uS19c (92 aa).

It belongs to the universal ribosomal protein uS19 family.

It localises to the plastid. Its subcellular location is the chloroplast. Functionally, protein S19 forms a complex with S13 that binds strongly to the 16S ribosomal RNA. The polypeptide is Small ribosomal subunit protein uS19c (Eucalyptus globulus subsp. globulus (Tasmanian blue gum)).